An 86-amino-acid chain; its full sequence is UPF0473 protein Clos_1662 (86 aa).

It belongs to the UPF0473 family.

The sequence is that of UPF0473 protein Clos_1662 from Alkaliphilus oremlandii (strain OhILAs) (Clostridium oremlandii (strain OhILAs)).